We begin with the raw amino-acid sequence, 471 residues long: Probable ribonuclease FAU-1 (471 aa).

It belongs to the FAU-1 family.

Functionally, probable RNase involved in rRNA stability through maturation and/or degradation of precursor rRNAs. Binds to RNA in loop regions with AU-rich sequences. The polypeptide is Probable ribonuclease FAU-1 (Caldivirga maquilingensis (strain ATCC 700844 / DSM 13496 / JCM 10307 / IC-167)).